Here is a 662-residue protein sequence, read N- to C-terminus: ABC transporter G family member 17 (662 aa).

One can recognise an ABC transporter domain in the interval 22-276 (LAFNDLTYNV…FSEFGSPIPE (255 aa)). 69–76 (GASGAGKS) lines the ATP pocket. The 211-residue stretch at 356–566 (VETVILAKRY…PYEAVLHNEF (211 aa)) folds into the ABC transmembrane type-2 domain. 6 helical membrane passes run 375 to 395 (LIGTRVFIVMMTGFLLATVYW), 410 to 430 (FFSFAMATMFYSCADGLPAFI), 451 to 471 (VISHSLVTLPHLFALSIGFAA), 486 to 508 (FIYYLMIIFASFWSGCSFVTFVS), 514 to 536 (VMMSYMVTFGYLSYCLLFSGFYV), and 635 to 655 (LWVTLAWGFFFRILFYFSLLL).

The protein belongs to the ABC transporter superfamily. ABCG family. Eye pigment precursor importer (TC 3.A.1.204) subfamily.

It is found in the membrane. The protein is ABC transporter G family member 17 (ABCG17) of Arabidopsis thaliana (Mouse-ear cress).